Here is a 133-residue protein sequence, read N- to C-terminus: ATP synthase epsilon chain (133 aa).

This sequence belongs to the ATPase epsilon chain family. F-type ATPases have 2 components, CF(1) - the catalytic core - and CF(0) - the membrane proton channel. CF(1) has five subunits: alpha(3), beta(3), gamma(1), delta(1), epsilon(1). CF(0) has three main subunits: a, b and c.

The protein localises to the cell membrane. Its function is as follows. Produces ATP from ADP in the presence of a proton gradient across the membrane. The sequence is that of ATP synthase epsilon chain from Bacillus anthracis (strain A0248).